The primary structure comprises 411 residues: LL-diaminopimelate aminotransferase (411 aa).

Residues Tyr15 and Gly42 each contribute to the substrate site. Residues Tyr72, 108–109, Tyr132, Asn187, Tyr218, and 246–248 contribute to the pyridoxal 5'-phosphate site; these read SK and SFS. Positions 109, 132, and 187 each coordinate substrate. Lys249 carries the N6-(pyridoxal phosphate)lysine modification. Pyridoxal 5'-phosphate-binding residues include Arg257 and Asn292. Positions 292 and 388 each coordinate substrate.

Belongs to the class-I pyridoxal-phosphate-dependent aminotransferase family. LL-diaminopimelate aminotransferase subfamily. As to quaternary structure, homodimer. The cofactor is pyridoxal 5'-phosphate.

It carries out the reaction (2S,6S)-2,6-diaminopimelate + 2-oxoglutarate = (S)-2,3,4,5-tetrahydrodipicolinate + L-glutamate + H2O + H(+). Its pathway is amino-acid biosynthesis; L-lysine biosynthesis via DAP pathway; LL-2,6-diaminopimelate from (S)-tetrahydrodipicolinate (aminotransferase route): step 1/1. Its function is as follows. Involved in the synthesis of meso-diaminopimelate (m-DAP or DL-DAP), required for both lysine and peptidoglycan biosynthesis. Catalyzes the direct conversion of tetrahydrodipicolinate to LL-diaminopimelate. The polypeptide is LL-diaminopimelate aminotransferase (Cyanothece sp. (strain PCC 7425 / ATCC 29141)).